Here is a 619-residue protein sequence, read N- to C-terminus: (-)-camphene synthase, chloroplastic (619 aa).

Residues 1–47 constitute a chloroplast transit peptide; it reads MALVSVAPLVSMRRSLFSSPYELKSIDKTIPNLVMCRKRMSGTPSIR. Positions 370, 374, and 522 each coordinate Mg(2+). The DDXXD motif signature appears at 370–374; that stretch reads DDIYD.

The protein belongs to the terpene synthase family. Tpsd subfamily. Requires Mg(2+) as cofactor. The cofactor is Mn(2+).

It localises to the plastid. The protein localises to the chloroplast. The catalysed reaction is (2E)-geranyl diphosphate = (1S,4R)-camphene + diphosphate. It catalyses the reaction (2E)-geranyl diphosphate = (1R,5R)-alpha-pinene + diphosphate. It carries out the reaction (2E)-geranyl diphosphate = tricyclene + diphosphate. The enzyme catalyses (2E)-geranyl diphosphate = beta-myrcene + diphosphate. The catalysed reaction is (2E)-geranyl diphosphate = (1S,5S)-beta-pinene + diphosphate. It catalyses the reaction (2E)-geranyl diphosphate = (1S,5S)-alpha-pinene + diphosphate. It functions in the pathway terpene metabolism; oleoresin biosynthesis. Its pathway is secondary metabolite biosynthesis; terpenoid biosynthesis. Its function is as follows. Monoterpene synthase (TPS) involved in the biosynthesis of monoterpene natural products included in conifer oleoresin secretions and volatile emissions; these compounds contribute to biotic and abiotic stress defense against herbivores and pathogens. Catalyzes the conversion of (2E)-geranyl diphosphate (GPP) to (-)-camphene, (+)-alpha-pinene and (-)-alpha-pinene, and, to a lower extent, to tricyclene, myrcene and (-)-beta-pinene. This chain is (-)-camphene synthase, chloroplastic, found in Pinus contorta (Shore pine).